Here is a 192-residue protein sequence, read N- to C-terminus: UPF0301 protein Jann_3896 (192 aa).

The protein belongs to the UPF0301 (AlgH) family.

The chain is UPF0301 protein Jann_3896 from Jannaschia sp. (strain CCS1).